The primary structure comprises 593 residues: Arginine--tRNA ligase (593 aa).

The 'HIGH' region signature appears at 138 to 148 (ANPTGPLHVGH).

Belongs to the class-I aminoacyl-tRNA synthetase family. As to quaternary structure, monomer.

Its subcellular location is the cytoplasm. It carries out the reaction tRNA(Arg) + L-arginine + ATP = L-arginyl-tRNA(Arg) + AMP + diphosphate. This is Arginine--tRNA ligase from Burkholderia orbicola (strain MC0-3).